A 203-amino-acid chain; its full sequence is N-(5'-phosphoribosyl)anthranilate isomerase (203 aa).

It belongs to the TrpF family.

It catalyses the reaction N-(5-phospho-beta-D-ribosyl)anthranilate = 1-(2-carboxyphenylamino)-1-deoxy-D-ribulose 5-phosphate. It participates in amino-acid biosynthesis; L-tryptophan biosynthesis; L-tryptophan from chorismate: step 3/5. The polypeptide is N-(5'-phosphoribosyl)anthranilate isomerase (Listeria innocua serovar 6a (strain ATCC BAA-680 / CLIP 11262)).